Here is a 126-residue protein sequence, read N- to C-terminus: S-adenosylmethionine decarboxylase proenzyme (126 aa).

Catalysis depends on serine 63, which acts as the Schiff-base intermediate with substrate; via pyruvic acid. Pyruvic acid (Ser); by autocatalysis is present on serine 63. Residue histidine 68 is the Proton acceptor; for processing activity of the active site. Cysteine 83 serves as the catalytic Proton donor; for catalytic activity.

It belongs to the prokaryotic AdoMetDC family. Type 1 subfamily. In terms of assembly, heterotetramer of two alpha and two beta chains arranged as a dimer of alpha/beta heterodimers. Pyruvate serves as cofactor. In terms of processing, is synthesized initially as an inactive proenzyme. Formation of the active enzyme involves a self-maturation process in which the active site pyruvoyl group is generated from an internal serine residue via an autocatalytic post-translational modification. Two non-identical subunits are generated from the proenzyme in this reaction, and the pyruvate is formed at the N-terminus of the alpha chain, which is derived from the carboxyl end of the proenzyme. The post-translation cleavage follows an unusual pathway, termed non-hydrolytic serinolysis, in which the side chain hydroxyl group of the serine supplies its oxygen atom to form the C-terminus of the beta chain, while the remainder of the serine residue undergoes an oxidative deamination to produce ammonia and the pyruvoyl group blocking the N-terminus of the alpha chain.

The catalysed reaction is S-adenosyl-L-methionine + H(+) = S-adenosyl 3-(methylsulfanyl)propylamine + CO2. It functions in the pathway amine and polyamine biosynthesis; S-adenosylmethioninamine biosynthesis; S-adenosylmethioninamine from S-adenosyl-L-methionine: step 1/1. Functionally, catalyzes the decarboxylation of S-adenosylmethionine to S-adenosylmethioninamine (dcAdoMet), the propylamine donor required for the synthesis of the polyamines spermine and spermidine from the diamine putrescine. The chain is S-adenosylmethionine decarboxylase proenzyme from Pelotomaculum thermopropionicum (strain DSM 13744 / JCM 10971 / SI).